The primary structure comprises 392 residues: Alkaline phosphatase L (392 aa).

The N-terminal stretch at 1-23 is a signal peptide; sequence MYKRSLIAASLSVAALVSAQAMA.

Belongs to the PstS family. As to quaternary structure, homodimer.

It localises to the secreted. The protein localises to the periplasm. The enzyme catalyses a phosphate monoester + H2O = an alcohol + phosphate. In terms of biological role, has both a phosphomonoesterase and phosphodiesterase activity. The polypeptide is Alkaline phosphatase L (Pseudomonas aeruginosa (strain UCBPP-PA14)).